Reading from the N-terminus, the 236-residue chain is MEKLDLLYEGKAKRVYKTDDPRYYIIEYKDEATAFDGKKKGIIQGKGTVNNKVSAVFFQLLEENGVPTHFVELLSPTEMLVKRVEIIPLEVIVRNYAAGSISRRLGLEEGIKFDQPIVEFCYKNDELGDPMVNNYHILAMKLANEEEINALTQQALRINQILSQFLLGKNIILVDFKLEFGRTDEGDIVLADEISPDTCRFWDSATMEKLDKDRFRRDMGGVEEAYMEIARRLGCV.

It belongs to the SAICAR synthetase family.

The catalysed reaction is 5-amino-1-(5-phospho-D-ribosyl)imidazole-4-carboxylate + L-aspartate + ATP = (2S)-2-[5-amino-1-(5-phospho-beta-D-ribosyl)imidazole-4-carboxamido]succinate + ADP + phosphate + 2 H(+). It participates in purine metabolism; IMP biosynthesis via de novo pathway; 5-amino-1-(5-phospho-D-ribosyl)imidazole-4-carboxamide from 5-amino-1-(5-phospho-D-ribosyl)imidazole-4-carboxylate: step 1/2. The protein is Phosphoribosylaminoimidazole-succinocarboxamide synthase of Coprothermobacter proteolyticus (strain ATCC 35245 / DSM 5265 / OCM 4 / BT).